The chain runs to 142 residues: Protein NIM1-INTERACTING 1 (142 aa).

Residues 47–53 (DTFFKLI) are involved in NPR1/NIM1 interaction. The short motif at 60–64 (RKRRR) is the Nuclear localization signal element. Disordered stretches follow at residues 63-86 (RREE…RSGI) and 108-142 (MFVS…NLAL). The stretch at 110–141 (VSDHKEENTKVEQEEDQTEERNEDKALDLNLA) forms a coiled coil. Residues 111–121 (SDHKEENTKVE) show a composition bias toward basic and acidic residues.

The protein belongs to the NPR1-interactor family. In terms of assembly, interacts with NPR1 C-terminal region.

It localises to the nucleus. This Arabidopsis thaliana (Mouse-ear cress) protein is Protein NIM1-INTERACTING 1.